The primary structure comprises 320 residues: MASTAKEGSELTLAVIGCGTMGIAILSGILASLDEIHAPNSQSSETDETPSKLPTKFIACVRSPKGAEKIKKALSPYKTPVKIIQSDNVTACREADVVLLGCKPYMAEGILGEEGMVDALKGKLLISILAGVPAEQIYGYMYGKTPVNPEKEGLCQVVRAMPNTASGIRESMTVIATSSPPLSATTSSLITWIFKRIGDVVQLPAATMDASTALCGSGPAFFALILEAAIDGAVAMGLPRAEAQRMAAQTMKGAAGLVLSGEHPALLKDKVTTPGGCTIGGLMVLEEGGVRGTVARAVREATVVASQLGKGVQGVNGTRF.

It belongs to the pyrroline-5-carboxylate reductase family.

The catalysed reaction is L-proline + NADP(+) = (S)-1-pyrroline-5-carboxylate + NADPH + 2 H(+). The enzyme catalyses L-proline + NAD(+) = (S)-1-pyrroline-5-carboxylate + NADH + 2 H(+). It functions in the pathway amino-acid biosynthesis; L-proline biosynthesis; L-proline from L-glutamate 5-semialdehyde: step 1/1. This Lophium arboricola (Zalerion arboricola) protein is Pyrroline-5-carboxylate reductase (P5CR).